A 287-amino-acid polypeptide reads, in one-letter code: DDRGK domain-containing protein 1 (287 aa).

At 1 to 5 (MDLIL) the chain is on the lumenal side. The helical transmembrane segment at 6–26 (LLGIAVALLVILVTLFFFTKG) threads the bilayer. The Cytoplasmic portion of the chain corresponds to 27 to 287 (KGSQESGKYN…LINLVPVSAE (261 aa)). Disordered regions lie at residues 28-102 (GSQE…KRAK) and 135-164 (KVEAEKEAEEERKREEAEKKAREEKARQEH). Positions 44-68 (AQAAPRRAQVVRNQRNRARVAAAPA) are enriched in low complexity. Residues 85–102 (IPHADFNGEKMGAKKRAK) show a composition bias toward basic and acidic residues.

The protein belongs to the DDRGK1 family. In terms of assembly, interacts with Atg9; the interaction is transient.

The protein localises to the endoplasmic reticulum membrane. Functionally, substrate adapter for ufmylation, the covalent attachment of the ubiquitin-like modifier UFM1 to substrate proteins. Required for ufmylation of Atg9; protects the nervous system during aging, possibly by stabilizing Atg9 and supporting its function. The polypeptide is DDRGK domain-containing protein 1 (Culex quinquefasciatus (Southern house mosquito)).